A 338-amino-acid chain; its full sequence is UDP-3-O-acylglucosamine N-acyltransferase (338 aa).

The Proton acceptor role is filled by His243.

The protein belongs to the transferase hexapeptide repeat family. LpxD subfamily. Homotrimer.

The catalysed reaction is a UDP-3-O-[(3R)-3-hydroxyacyl]-alpha-D-glucosamine + a (3R)-hydroxyacyl-[ACP] = a UDP-2-N,3-O-bis[(3R)-3-hydroxyacyl]-alpha-D-glucosamine + holo-[ACP] + H(+). The protein operates within bacterial outer membrane biogenesis; LPS lipid A biosynthesis. In terms of biological role, catalyzes the N-acylation of UDP-3-O-acylglucosamine using 3-hydroxyacyl-ACP as the acyl donor. Is involved in the biosynthesis of lipid A, a phosphorylated glycolipid that anchors the lipopolysaccharide to the outer membrane of the cell. In Amoebophilus asiaticus (strain 5a2), this protein is UDP-3-O-acylglucosamine N-acyltransferase.